The chain runs to 367 residues: tRNA/tmRNA (uracil-C(5))-methyltransferase (367 aa).

S-adenosyl-L-methionine-binding residues include Gln190, Tyr218, Asn223, Glu239, and Asp299. Cys324 (nucleophile) is an active-site residue. The active-site Proton acceptor is the Glu358.

It belongs to the class I-like SAM-binding methyltransferase superfamily. RNA M5U methyltransferase family. TrmA subfamily.

It catalyses the reaction uridine(54) in tRNA + S-adenosyl-L-methionine = 5-methyluridine(54) in tRNA + S-adenosyl-L-homocysteine + H(+). The enzyme catalyses uridine(341) in tmRNA + S-adenosyl-L-methionine = 5-methyluridine(341) in tmRNA + S-adenosyl-L-homocysteine + H(+). In terms of biological role, dual-specificity methyltransferase that catalyzes the formation of 5-methyluridine at position 54 (m5U54) in all tRNAs, and that of position 341 (m5U341) in tmRNA (transfer-mRNA). This Pectobacterium carotovorum subsp. carotovorum (strain PC1) protein is tRNA/tmRNA (uracil-C(5))-methyltransferase.